Reading from the N-terminus, the 341-residue chain is Phosphate acyltransferase (341 aa).

The protein belongs to the PlsX family. In terms of assembly, homodimer. Probably interacts with PlsY.

The protein localises to the cytoplasm. It catalyses the reaction a fatty acyl-[ACP] + phosphate = an acyl phosphate + holo-[ACP]. It functions in the pathway lipid metabolism; phospholipid metabolism. Functionally, catalyzes the reversible formation of acyl-phosphate (acyl-PO(4)) from acyl-[acyl-carrier-protein] (acyl-ACP). This enzyme utilizes acyl-ACP as fatty acyl donor, but not acyl-CoA. The protein is Phosphate acyltransferase of Elusimicrobium minutum (strain Pei191).